Consider the following 418-residue polypeptide: uncharacterized protein (418 aa).

An N-acetyltransferase domain is found at 7–158 (IDVRPIAEAE…TGLDPRWSGP (152 aa)). Acetyl-CoA contacts are provided by residues 87-89 (VTV) and 95-100 (RRGLLT). The active-site Proton donor is the tyrosine 128. The active-site Proton acceptor; via carboxylate is phenylalanine 418.

The protein belongs to the acetyltransferase Eis family. In terms of assembly, homohexamer; trimer of dimers.

This is an uncharacterized protein from Streptomyces avermitilis (strain ATCC 31267 / DSM 46492 / JCM 5070 / NBRC 14893 / NCIMB 12804 / NRRL 8165 / MA-4680).